Reading from the N-terminus, the 239-residue chain is DUP240 protein DFP3 (239 aa).

At 1–54 (MQPHLDNNSNNDDVKLDTLGEQNVLSSAENITLPEDTFKSYMTYLLYEMAHYKP) the chain is on the cytoplasmic side. A helical membrane pass occupies residues 55–75 (MIFSFLALSVSILIVVIFHNV). The Extracellular segment spans residues 76–79 (KACD). A helical membrane pass occupies residues 80–104 (VVFGFSIFVTSILFLSTLIPFNVYI). The Cytoplasmic segment spans residues 105–239 (SDEGFRIKLL…RKQYPDADIP (135 aa)).

This sequence belongs to the DUP/COS family. As to quaternary structure, interacts according to large scale protein interaction studies with MEC3 and ULP1.

It is found in the membrane. The sequence is that of DUP240 protein DFP3 from Saccharomyces cerevisiae (strain ATCC 204508 / S288c) (Baker's yeast).